Here is a 615-residue protein sequence, read N- to C-terminus: Sodium-dependent neutral amino acid transporter B(0)AT3 (615 aa).

The Cytoplasmic portion of the chain corresponds to 1-26 (MAQASGMDPLVDIEDERPKWDNKLQY). The chain crosses the membrane as a helical span at residues 27–47 (LLSCIGFAVGLGNIWRFPYLC). Residues 48 to 52 (QTHGG) are Extracellular-facing. Residues 53–73 (GAFLIPYFIALVFEGIPLFYI) form a helical membrane-spanning segment. Over 74–105 (ELAIGQRLRRGSIGVWKTISPYLGGVGLGCFS) the chain is Cytoplasmic. The helical transmembrane segment at 106 to 126 (VSFLVSLYYNTVLLWVLWFFL) threads the bilayer. Over 127–177 (NSFQHPLPWSTCPLDLNRTGFVQECQSSGTVSYFWYRQTLNITSDISNTGT) the chain is Extracellular. N-linked (GlcNAc...) asparagine glycosylation is found at Asn-143 and Asn-167. The helical transmembrane segment at 178-198 (IQWKLFLCLVACWSTVYLCVI) threads the bilayer. The Cytoplasmic segment spans residues 199–206 (RGIESTGK). Residues 207 to 227 (VIYFTALFPYLVLTIFLIRGL) form a helical membrane-spanning segment. Residues 228-255 (TLPGATEGLIYLFTPNMKTLQNPRVWLD) are Extracellular-facing. A helical membrane pass occupies residues 256 to 276 (AATQIFFSLSLAFGGHIAFAS). At 277-288 (YNPPRNNCEKDA) the chain is on the cytoplasmic side. The chain crosses the membrane as a helical span at residues 289–309 (VIIALVNSMTSLYASIAIFSV). The Extracellular segment spans residues 310 to 397 (MGFKASNDYG…FTEAVLHMPG (88 aa)). N-linked (GlcNAc...) asparagine glycosylation occurs at Asn-353. The helical transmembrane segment at 398 to 418 (ASVWSVLFFGMLFTLGLSSMF) threads the bilayer. Residues 419-441 (GNMEGVITPLLDMGILPKGIPKE) lie on the Cytoplasmic side of the membrane. A helical membrane pass occupies residues 442-462 (VMTGVICFACFLSAICFTLQS). Residues 463 to 472 (GGYWLEIFDS) are Extracellular-facing. The helical transmembrane segment at 473 to 493 (FAASLNLIIFAFMEVVGVIHI) threads the bilayer. Topologically, residues 494 to 520 (YGMKRFCDDIEWMTGRRPGLYWQVTWR) are cytoplasmic. Residues 521-541 (VVSPMLLFGIFLSYIVLLIQT) form a helical membrane-spanning segment. Over 542–570 (PPSYKAWNPQYEHFPSREEKFYPGWVQVT) the chain is Extracellular. Residues 571-591 (CVLLSFLPSLWVPGVALAQLL) traverse the membrane as a helical segment. The Cytoplasmic portion of the chain corresponds to 592-615 (SQYKQRWKATHLESGLKLQESRGC).

Belongs to the sodium:neurotransmitter symporter (SNF) (TC 2.A.22) family. SLC6A18 subfamily. In terms of assembly, interacts with CLTRN; this interaction regulates the trafficking of SLC6A18 to the cell membrane and its activity. As to expression, expressed predominantly in kidney.

The protein resides in the apical cell membrane. The protein localises to the cell membrane. It carries out the reaction L-alanine(out) + chloride(out) + 2 Na(+)(out) = L-alanine(in) + chloride(in) + 2 Na(+)(in). The enzyme catalyses glycine(out) + chloride(out) + 2 Na(+)(out) = glycine(in) + chloride(in) + 2 Na(+)(in). It catalyses the reaction L-methionine(out) + chloride(out) + 2 Na(+)(out) = L-methionine(in) + chloride(in) + 2 Na(+)(in). The catalysed reaction is L-valine(out) + chloride(out) + 2 Na(+)(out) = L-valine(in) + chloride(in) + 2 Na(+)(in). It carries out the reaction L-isoleucine(out) + chloride(out) + 2 Na(+)(out) = L-isoleucine(in) + chloride(in) + 2 Na(+)(in). The enzyme catalyses L-serine(out) + chloride(out) + 2 Na(+)(out) = L-serine(in) + chloride(in) + 2 Na(+)(in). It catalyses the reaction L-leucine(out) + chloride(out) + 2 Na(+)(out) = L-leucine(in) + chloride(in) + 2 Na(+)(in). Symporter that transports one amino acid molecule together with two sodium and one chloride ions in kidneys and plays a role in the neutral amino acids reabsorption. Preferentially transports neutral amino acids such as L-glycine and L-alanine but also other neutral amino acids. Required CLTRN for cell surface expression and for its amino acid transporter activity. The transport mechanism is pH-independent. The chain is Sodium-dependent neutral amino acid transporter B(0)AT3 from Mus musculus (Mouse).